Here is a 162-residue protein sequence, read N- to C-terminus: Transcription elongation factor GreA (162 aa).

Residues 45–65 (NAEYHAAKERQLFIEARINEL) adopt a coiled-coil conformation.

It belongs to the GreA/GreB family.

Its function is as follows. Necessary for efficient RNA polymerase transcription elongation past template-encoded arresting sites. The arresting sites in DNA have the property of trapping a certain fraction of elongating RNA polymerases that pass through, resulting in locked ternary complexes. Cleavage of the nascent transcript by cleavage factors such as GreA or GreB allows the resumption of elongation from the new 3'terminus. GreA releases sequences of 2 to 3 nucleotides. This chain is Transcription elongation factor GreA, found in Wolinella succinogenes (strain ATCC 29543 / DSM 1740 / CCUG 13145 / JCM 31913 / LMG 7466 / NCTC 11488 / FDC 602W) (Vibrio succinogenes).